A 125-amino-acid polypeptide reads, in one-letter code: Histone H2A.v3 (125 aa).

The protein belongs to the histone H2A family. In terms of assembly, the nucleosome is a histone octamer containing two molecules each of H2A, H2B, H3 and H4 assembled in one H3-H4 heterotetramer and two H2A-H2B heterodimers. The octamer wraps approximately 147 bp of DNA.

It is found in the nucleus. The protein resides in the chromosome. Core component of nucleosome which plays a central role in DNA double strand break (DSB) repair. Nucleosomes wrap and compact DNA into chromatin, limiting DNA accessibility to the cellular machineries which require DNA as a template. Histones thereby play a central role in transcription regulation, DNA repair, DNA replication and chromosomal stability. DNA accessibility is regulated via a complex set of post-translational modifications of histones, also called histone code, and nucleosome remodeling. This Dictyostelium discoideum (Social amoeba) protein is Histone H2A.v3 (H2Av3).